The following is an 83-amino-acid chain: Mu-theraphotoxin-Hhn2l (83 aa).

The first 21 residues, 1 to 21, serve as a signal peptide directing secretion; the sequence is MKASMFLALAGLVLLFVVGYA. The propeptide occupies 22-48; sequence SESEEKEFPIELLSKIFAVDVFKGEER. Disulfide bonds link Cys-50-Cys-65, Cys-57-Cys-70, and Cys-64-Cys-77. Leu-81 is modified (leucine amide).

The protein belongs to the neurotoxin 10 (Hwtx-1) family. 15 (Hntx-3) subfamily. In terms of assembly, monomer. Expressed by the venom gland.

The protein resides in the secreted. In terms of biological role, lethal neurotoxin. Selectively blocks tetrodotoxin-sensitive voltage-gated sodium channels (Nav). Does not affect tetrodotoxin-resistant voltage-gated sodium channels or calcium channels. This chain is Mu-theraphotoxin-Hhn2l, found in Cyriopagopus hainanus (Chinese bird spider).